The sequence spans 70 residues: Putative membrane protein insertion efficiency factor (70 aa).

It belongs to the UPF0161 family.

It localises to the cell inner membrane. Its function is as follows. Could be involved in insertion of integral membrane proteins into the membrane. This is Putative membrane protein insertion efficiency factor from Desulforapulum autotrophicum (strain ATCC 43914 / DSM 3382 / VKM B-1955 / HRM2) (Desulfobacterium autotrophicum).